The chain runs to 152 residues: Small ribosomal subunit protein uS13A (152 aa).

This sequence belongs to the universal ribosomal protein uS13 family. Component of the small ribosomal subunit (SSU). Mature yeast ribosomes consist of a small (40S) and a large (60S) subunit. The 40S small subunit contains 1 molecule of ribosomal RNA (18S rRNA) and at least 33 different proteins. The large 60S subunit contains 3 rRNA molecules (25S, 5.8S and 5S rRNA) and at least 46 different proteins.

The protein localises to the cytoplasm. Functionally, component of the ribosome, a large ribonucleoprotein complex responsible for the synthesis of proteins in the cell. The small ribosomal subunit (SSU) binds messenger RNAs (mRNAs) and translates the encoded message by selecting cognate aminoacyl-transfer RNA (tRNA) molecules. The large subunit (LSU) contains the ribosomal catalytic site termed the peptidyl transferase center (PTC), which catalyzes the formation of peptide bonds, thereby polymerizing the amino acids delivered by tRNAs into a polypeptide chain. The nascent polypeptides leave the ribosome through a tunnel in the LSU and interact with protein factors that function in enzymatic processing, targeting, and the membrane insertion of nascent chains at the exit of the ribosomal tunnel. In Schizosaccharomyces pombe (strain 972 / ATCC 24843) (Fission yeast), this protein is Small ribosomal subunit protein uS13A (rps1801).